An 86-amino-acid polypeptide reads, in one-letter code: Probable weak neurotoxin NNAM2I (86 aa).

Positions 1-21 (MKTLPLTLVVVTIVCLDLGYT) are cleaved as a signal peptide. 5 disulfides stabilise this stretch: Cys-24/Cys-45, Cys-27/Cys-32, Cys-38/Cys-63, Cys-67/Cys-78, and Cys-79/Cys-84.

It belongs to the three-finger toxin family. Ancestral subfamily. Orphan group II sub-subfamily. In terms of tissue distribution, expressed by the venom gland.

Its subcellular location is the secreted. Its function is as follows. Binds with low affinity to muscular (alpha-1-beta-1-delta-epsilon/CHRNA1-CHRNB1-CHRND-CHRNE) and very low affinity to neuronal (alpha-7/CHRNA7) nicotinic acetylcholine receptor (nAChR). This chain is Probable weak neurotoxin NNAM2I, found in Naja atra (Chinese cobra).